Reading from the N-terminus, the 386-residue chain is Bifunctional enzyme IspD/IspF (386 aa).

The 2-C-methyl-D-erythritol 4-phosphate cytidylyltransferase stretch occupies residues 1–226 (MATPSPLPSF…EDFMADLLPV (226 aa)). Positions 227–386 (RVGTGFDVHK…ATVVRKDTPA (160 aa)) are 2-C-methyl-D-erythritol 2,4-cyclodiphosphate synthase. A divalent metal cation is bound by residues aspartate 233 and histidine 235. 4-CDP-2-C-methyl-D-erythritol 2-phosphate contacts are provided by residues 233 to 235 (DVH) and 259 to 260 (HS). Histidine 267 serves as a coordination point for a divalent metal cation. 4-CDP-2-C-methyl-D-erythritol 2-phosphate is bound by residues 281 to 283 (DIG), 357 to 360 (TTTE), phenylalanine 364, and arginine 367.

This sequence in the N-terminal section; belongs to the IspD/TarI cytidylyltransferase family. IspD subfamily. It in the C-terminal section; belongs to the IspF family. A divalent metal cation is required as a cofactor.

It catalyses the reaction 2-C-methyl-D-erythritol 4-phosphate + CTP + H(+) = 4-CDP-2-C-methyl-D-erythritol + diphosphate. The catalysed reaction is 4-CDP-2-C-methyl-D-erythritol 2-phosphate = 2-C-methyl-D-erythritol 2,4-cyclic diphosphate + CMP. It functions in the pathway isoprenoid biosynthesis; isopentenyl diphosphate biosynthesis via DXP pathway; isopentenyl diphosphate from 1-deoxy-D-xylulose 5-phosphate: step 2/6. Its pathway is isoprenoid biosynthesis; isopentenyl diphosphate biosynthesis via DXP pathway; isopentenyl diphosphate from 1-deoxy-D-xylulose 5-phosphate: step 4/6. Its function is as follows. Bifunctional enzyme that catalyzes the formation of 4-diphosphocytidyl-2-C-methyl-D-erythritol from CTP and 2-C-methyl-D-erythritol 4-phosphate (MEP) (IspD), and catalyzes the conversion of 4-diphosphocytidyl-2-C-methyl-D-erythritol 2-phosphate (CDP-ME2P) to 2-C-methyl-D-erythritol 2,4-cyclodiphosphate (ME-CPP) with a corresponding release of cytidine 5-monophosphate (CMP) (IspF). This is Bifunctional enzyme IspD/IspF from Erythrobacter litoralis (strain HTCC2594).